A 429-amino-acid chain; its full sequence is MSKSLQAIRGMNDILPEQSPLWRYFEGTVAGLLDTYGYSQIRTPIVEFTELFKRSIGEVTDIVEKEMYTFEDRNGDSLTLRPEGTAACVRAVLEHGITGNGQVQKLWYIGQMFRHERPQKGRYRQFHQIGVEVFNLDGPDIDAELIMLTWRLWGLLGIQDAVKLELNSLGTSEARARYRDALVEFLSARLEQLDEDSQRRLKSNPLRILDSKDPNTQAVLVGAPKLEDYLDEDSRVHFEGLKARLDAAGIPFVINTKLVRGLDYYSKTVFEWVTDKLGAQGTVCAGGRYDGLVEQMGGKPTTGVGFAMGIERLILLLETLGKVPASINRQIDVYLCAFGEQAELAGLRLSESLRDRLPGLRLAVNAGGGSFKSQFKKADKSGALFALILGDDELAKQEIGLKPLRGQGEQQNIAWDALAEHLETAIAQA.

Belongs to the class-II aminoacyl-tRNA synthetase family. Homodimer.

It localises to the cytoplasm. The enzyme catalyses tRNA(His) + L-histidine + ATP = L-histidyl-tRNA(His) + AMP + diphosphate + H(+). This chain is Histidine--tRNA ligase, found in Pseudomonas putida (strain W619).